The following is an 89-amino-acid chain: Small ribosomal subunit protein uS15 (89 aa).

Belongs to the universal ribosomal protein uS15 family. As to quaternary structure, part of the 30S ribosomal subunit. Forms a bridge to the 50S subunit in the 70S ribosome, contacting the 23S rRNA.

Functionally, one of the primary rRNA binding proteins, it binds directly to 16S rRNA where it helps nucleate assembly of the platform of the 30S subunit by binding and bridging several RNA helices of the 16S rRNA. Forms an intersubunit bridge (bridge B4) with the 23S rRNA of the 50S subunit in the ribosome. This is Small ribosomal subunit protein uS15 from Prochlorococcus marinus (strain MIT 9215).